The primary structure comprises 438 residues: Probable exopolygalacturonase B (438 aa).

Residues 1-15 (MYLLPLTLFLTAAFG) form the signal peptide. Asparagine 118, asparagine 185, and asparagine 225 each carry an N-linked (GlcNAc...) asparagine glycan. One copy of the PbH1 1 repeat lies at 209–248 (TNDVSFDNVYIHAFSTNASSDPANTDGMDSLDVDGVSFTN). The active-site Proton donor is aspartate 255. A disulfide bond links cysteine 257 and cysteine 274. 2 N-linked (GlcNAc...) asparagine glycosylation sites follow: asparagine 263 and asparagine 275. Histidine 278 is a catalytic residue. 2 PbH1 repeats span residues 295 to 316 (IENV…RLKA) and 327 to 348 (INNV…VLDQ). N-linked (GlcNAc...) asparagine glycans are attached at residues asparagine 302, asparagine 329, asparagine 354, and asparagine 366. Cysteine 392 and cysteine 398 are oxidised to a cystine. The stretch at 398 to 430 (CTNITLSNVNLTSPKGTAEIVCDDIQGGIGVDC) is one PbH1 4 repeat. Asparagine 400 and asparagine 407 each carry an N-linked (GlcNAc...) asparagine glycan.

Belongs to the glycosyl hydrolase 28 family.

It is found in the secreted. It catalyses the reaction [(1-&gt;4)-alpha-D-galacturonosyl](n) + H2O = alpha-D-galacturonate + [(1-&gt;4)-alpha-D-galacturonosyl](n-1). In terms of biological role, specific in hydrolyzing the terminal glycosidic bond of polygalacturonic acid and oligogalacturonates. This is Probable exopolygalacturonase B (pgxB) from Aspergillus niger (strain ATCC MYA-4892 / CBS 513.88 / FGSC A1513).